We begin with the raw amino-acid sequence, 207 residues long: Protein YABBY 6 (207 aa).

Residues 16-43 form a C4-type zinc finger; that stretch reads CNFCNTILAVSVPGNSMLNIVTVRCGHC.

This sequence belongs to the YABBY family. Expressed in leaf blades, leaf sheaths and flowers.

The protein resides in the nucleus. This chain is Protein YABBY 6 (YAB6), found in Oryza sativa subsp. japonica (Rice).